A 984-amino-acid polypeptide reads, in one-letter code: E3 ubiquitin-protein ligase BRE1A (984 aa).

Residues 1–34 (MSGAGNKRAAGEPGPSAPPEKKAGVEDSGTTVET) form a disordered region. Residues 43–90 (TEELDIRTLQTKNRKLAEMLDQRQAIEDELREHIEKLERRQATDDASL) are a coiled coil. The tract at residues 128–150 (VVPEPEPDSDSNQERKDERERGE) is disordered. The span at 139-150 (NQERKDERERGE) shows a compositional bias: basic and acidic residues. 2 coiled-coil regions span residues 236-378 (ADTL…VKET) and 429-907 (SLHK…TTKK). A disordered region spans residues 506-632 (SDLSKIRSRS…KHEDGRKKEA (127 aa)). The span at 514–526 (RSGSALLQSQSST) shows a compositional bias: polar residues. Composition is skewed to basic and acidic residues over residues 527–540 (EDTKEEPPEIKQEP) and 558–632 (SEVK…KKEA). The RING-type zinc-finger motif lies at 931-970 (CPCCNMRKKDAVLTKCFHVFCFECVKTRYDTRQRKCPKCN).

The protein belongs to the BRE1 family. Component of the RNF20/40 complex (also known as BRE1 complex).

The protein localises to the nucleus. The catalysed reaction is S-ubiquitinyl-[E2 ubiquitin-conjugating enzyme]-L-cysteine + [acceptor protein]-L-lysine = [E2 ubiquitin-conjugating enzyme]-L-cysteine + N(6)-ubiquitinyl-[acceptor protein]-L-lysine.. It participates in protein modification; protein ubiquitination. Functionally, component of the RNF20/40 E3 ubiquitin-protein ligase complex that mediates monoubiquitination of 'Lys-120' of histone H2B (H2BK120ub1). H2BK120ub1 gives a specific tag for epigenetic transcriptional activation and is also prerequisite for histone H3 'Lys-4' and 'Lys-79' methylation (H3K4me and H3K79me, respectively). The sequence is that of E3 ubiquitin-protein ligase BRE1A (RNF20) from Gallus gallus (Chicken).